Here is a 223-residue protein sequence, read N- to C-terminus: MNILIFGPNGSGKGTQGDLIKQKYNLAHIESGAIFREHIGGGTELGKKAKAYIDRGDLVPDEITIPMVLETLKTKGQHGWLLDGFPRNMVQAEKLWEALQKEGMRLDYVVEILLPRETAKNRIMGRRLCKNNNNHPNNIFIEAIKPNGDVCRVCGGTLSSRSDDQDETAINKRHDIYYNTTDGTLAAAYFFKKLADQGKTKYIELNGEGSIESIKETLLSKLA.

An ATP-binding site is contributed by 10–15 (GSGKGT). The tract at residues 30 to 59 (ESGAIFREHIGGGTELGKKAKAYIDRGDLV) is NMP. Residues Ser31, Arg36, 57–59 (DLV), 84–87 (GFPR), and Gln91 each bind AMP. Positions 125–164 (GRRLCKNNNNHPNNIFIEAIKPNGDVCRVCGGTLSSRSDD) are LID. Arg126 contacts ATP. The AMP site is built by Arg161 and Arg173. ATP is bound at residue Gly209.

Belongs to the adenylate kinase family. As to quaternary structure, monomer.

It localises to the cytoplasm. The enzyme catalyses AMP + ATP = 2 ADP. The protein operates within purine metabolism; AMP biosynthesis via salvage pathway; AMP from ADP: step 1/1. Functionally, catalyzes the reversible transfer of the terminal phosphate group between ATP and AMP. Plays an important role in cellular energy homeostasis and in adenine nucleotide metabolism. This is Adenylate kinase from Desulfovibrio desulfuricans (strain ATCC 27774 / DSM 6949 / MB).